Consider the following 429-residue polypeptide: MYIEIIDIYAREVLDSRGNPTVEVEVMLEDGSVGRAIVPSGASTGKFEALELRDKDSKRYGGKGVLKAIENVNEKIAPKLLGLNAYEQVSIDKTLLEIDGTENKSNIGANAILGVSMAVSRAVANSLQLPLYKYLGGVNAKVLPVPLMNVINGGAHADNNLDIQEFMIVPAGAPSFREALRYGAETFHALKRILKEAGHVTAVGDEGGFAPNLQNNEEAIQVLIRAIEKAGYVPGKDIYIALDVAASEFYNGETGKYFIDGTEKTSDELIEYYESLINKYPIISIEDPFDQEDWDSYRKFNEKVGKKVQIVGDDLYVTNVKRLEKGIELKATNSILIKLNQIGSVTETLNAIELAKTNNMTNVISHRSGETEDTFIADLAVATNAGQIKTGSLSRSERIAKYNQLLRIEEELGDAAEYKGIKAFYSIDR.

Position 164 (Gln164) interacts with (2R)-2-phosphoglycerate. The active-site Proton donor is Glu206. Residues Asp243, Glu286, and Asp313 each contribute to the Mg(2+) site. Lys338, Arg367, Ser368, and Lys389 together coordinate (2R)-2-phosphoglycerate. Residue Lys338 is the Proton acceptor of the active site.

Belongs to the enolase family. Mg(2+) is required as a cofactor.

Its subcellular location is the cytoplasm. It is found in the secreted. It localises to the cell surface. It carries out the reaction (2R)-2-phosphoglycerate = phosphoenolpyruvate + H2O. Its pathway is carbohydrate degradation; glycolysis; pyruvate from D-glyceraldehyde 3-phosphate: step 4/5. Catalyzes the reversible conversion of 2-phosphoglycerate (2-PG) into phosphoenolpyruvate (PEP). It is essential for the degradation of carbohydrates via glycolysis. This is Enolase from Thermosipho melanesiensis (strain DSM 12029 / CIP 104789 / BI429).